A 342-amino-acid polypeptide reads, in one-letter code: Serpentine receptor class r-10 (342 aa).

Residues 1–11 are Extracellular-facing; it reads MTGELWLTLVD. Residues 12 to 32 traverse the membrane as a helical segment; it reads TADIVGFSMTFCVNIVLLFLL. Over 33 to 38 the chain is Cytoplasmic; that stretch reads KNRGKN. A helical membrane pass occupies residues 39-59; it reads LGTYKHLMAFFSVFSIFYAII. The Extracellular segment spans residues 60–92; the sequence is ESILRPIMHIENATFFLISRKRFNYSTRLGKIN. Residues asparagine 71 and asparagine 83 are each glycosylated (N-linked (GlcNAc...) asparagine). Residues 93-113 traverse the membrane as a helical segment; sequence SAFYCACFATSFVVSGVHFVY. The Cytoplasmic segment spans residues 114–131; that stretch reads RFFASCKPHLLRSFNMPY. A helical transmembrane segment spans residues 132–152; the sequence is LLLWPLGCSIPVMMWASVSYF. The Extracellular portion of the chain corresponds to 153-202; sequence LYPDTAFTEAAVTNVLNTHYHSIKKDNVSYIAYVYYQYDENGVRYVYLKN. Asparagine 179 carries an N-linked (GlcNAc...) asparagine glycan. Residues 203–223 traverse the membrane as a helical segment; sequence LLGCFVHYFVMSATFVVMFIC. Over 224-257 the chain is Cytoplasmic; the sequence is GYLTWKTMRKHKTASDRTRQLQKQLFKALVLQTL. The helical transmembrane segment at 258–278 threads the bilayer; that stretch reads IPTIFMYAPTGVMFIAPFFSI. At 279–285 the chain is on the extracellular side; the sequence is NLNANAN. A helical membrane pass occupies residues 286-306; it reads FIVFCSFLYPGLDPLILILII. At 307-342 the chain is on the cytoplasmic side; sequence RDFRQTVFKFFCLRKKNSVDESRSTTRANMSQVATH.

The protein belongs to the nematode receptor-like protein str family. As to quaternary structure, interacts with odr-4.

The protein resides in the cell projection. It localises to the cilium membrane. In terms of biological role, an odorant receptor which affects chemotaxis to the volatile odorant diacetyl. Specifies AWA neuronal cell fate via the odr-7 pathway. This Caenorhabditis briggsae protein is Serpentine receptor class r-10.